The primary structure comprises 360 residues: Peptide chain release factor 1 (360 aa).

At glutamine 235 the chain carries N5-methylglutamine.

This sequence belongs to the prokaryotic/mitochondrial release factor family. In terms of processing, methylated by PrmC. Methylation increases the termination efficiency of RF1.

The protein resides in the cytoplasm. In terms of biological role, peptide chain release factor 1 directs the termination of translation in response to the peptide chain termination codons UAG and UAA. The protein is Peptide chain release factor 1 of Blochmanniella pennsylvanica (strain BPEN).